The following is a 607-amino-acid chain: MSSGLRAADFPRWKRHISEQLRRRDRLQRQAFEEIILQYNKLLEKSDLHSVLAQKLQAEKHDVPNRHEISPGHDGTWNDSQLQEMAQLRIKHQEELTELHKKRGELAQLVIDLNNQMQRKDREMQMNEAKIAECLQTISDLETECLDLRTKLCDLERANQTLKDEYDALQITFTALEGKLRKTTEENQELVTRWMAEKAQEANRLNAENEKDSRRRQARLQKELAEAAKEPLPVEQDDDIEVIVDETSDHTEETSPVRAISRAATKRLSQPAGGLLDSITNIFGRRSVSSFPVPQDNVDTHPGSGKEVRVPTTALCVFDAHDGEVNAVQFSPGSRLLATGGMDRRVKLWEVFGEKCEFKGSLSGSNAGITSIEFDSAGSYLLAASNDFASRIWTVDDSRLRHTLTGHSGKVLSAKFLLDNARIVSGSHDRTLKHWDLRSKVCIKTVFAGSSCNDIVCTEQCVMSGHFDKKIRFWDIRSESIVREMELLGKITALDLNPERTELLSCSRDDLLKVIDLRTNAIKQTFSAPGFKCGSDWTRVVFSPDGSYVAAGSAEGSLYTWSVLTGKVEKVLSKQHSSSINAVAWSPSGLHVVSVDKGCKAVLWAQY.

The interaction with ATG5 stretch occupies residues Trp13–Leu43. A coiled-coil region spans residues Asp79 to Glu230. Ser139 is modified (phosphoserine). The tract at residues Ala207–Glu230 is WIPI2-binding. An RB1CC1-binding region spans residues Glu230–Val242. Residues Ser269 and Ser287 each carry the phosphoserine modification. Positions Asp296–Asp299 match the Caspase cleavage motif. 7 WD repeats span residues Ala320 to Lys359, Gly364 to Thr403, Gly406 to Thr445, Phe447 to Glu484, Glu486 to Thr525, Lys532 to Ser573, and Gln575 to Tyr607.

The protein belongs to the WD repeat ATG16 family. Homodimer. Homooligomer. Heterooligomer with ATG16L2. Interacts with WIPI1. Interacts with WIPI2. Interacts with RB1CC1; the interaction is required for ULK1 complex-dependent autophagy. Interacts with ATG5. Part of the minor complex composed of 4 sets of ATG12-ATG5 and ATG16L1 (400 kDa); this complex interacts with ATG3 leading to disruption of ATG7 interaction and promotion of ATG8-like proteins lipidation. Part of the major complex composed of 8 sets of ATG12-ATG5 and ATG16L1 (800 kDa). Interacts with RAB33B (GTP- and GDP-bound forms); the complex consists of a tetramer where two RAB33B molecules bind independently one molecule of the ATG16L1 homodimer; the interaction promotes ATG12-ATG5-ATG16L1 complex recruitment to phagophores. Interacts (via WD repeats) with TMEM59; the interaction mediates unconventional autophagic activity of TMEM59. Interacts with TLR2. Interacts (via WD repeats) with MEFV. Interacts with PPP1CA; the interaction dephosphorylates ATG16L1 causing dissociation of ATG12-ATG5-ATG16L1 complex. Interacts (via N-terminal) with CLTC. Interacts with NOD1. Interacts with NOD2. Interacts with TUFM. Interacts with TRIM16. Interacts (via WD repeats) with SPATA33. Interacts with IRGM. Post-translationally, proteolytic cleavage by activated CASP3 leads to degradation and may regulate autophagy upon cellular stress and apoptotic stimuli. Phosphorylation at Ser-139 promotes association with the ATG12-ATG5 conjugate to form the ATG12-ATG5-ATG16L1 complex.

The protein resides in the cytoplasm. Its subcellular location is the preautophagosomal structure membrane. It is found in the endosome membrane. The protein localises to the lysosome membrane. Plays an essential role in both canonical and non-canonical autophagy: interacts with ATG12-ATG5 to mediate the lipidation to ATG8 family proteins (MAP1LC3A, MAP1LC3B, MAP1LC3C, GABARAPL1, GABARAPL2 and GABARAP). Acts as a molecular hub, coordinating autophagy pathways via distinct domains that support either canonical or non-canonical signaling. During canonical autophagy, interacts with ATG12-ATG5 to mediate the conjugation of phosphatidylethanolamine (PE) to ATG8 proteins, to produce a membrane-bound activated form of ATG8. Thereby, controls the elongation of the nascent autophagosomal membrane. As part of the ATG8 conjugation system with ATG5 and ATG12, required for recruitment of LRRK2 to stressed lysosomes and induction of LRRK2 kinase activity in response to lysosomal stress. Also involved in non-canonical autophagy, a parallel pathway involving conjugation of ATG8 proteins to single membranes at endolysosomal compartments, probably by catalyzing conjugation of phosphatidylserine (PS) to ATG8. Non-canonical autophagy plays a key role in epithelial cells to limit lethal infection by influenza A (IAV) virus. Regulates mitochondrial antiviral signaling (MAVS)-dependent type I interferon (IFN-I) production. Negatively regulates NOD1- and NOD2-driven inflammatory cytokine response. Instead, promotes an autophagy-dependent antibacterial pathway together with NOD1 or NOD2. Plays a role in regulating morphology and function of Paneth cell. This is Autophagy-related protein 16-1 from Pongo abelii (Sumatran orangutan).